Consider the following 324-residue polypeptide: Glyoxylate/hydroxypyruvate reductase B (324 aa).

Active-site residues include Arg-237 and Glu-266. Residue His-285 is the Proton donor of the active site.

It belongs to the D-isomer specific 2-hydroxyacid dehydrogenase family. GhrB subfamily. Homodimer.

The protein resides in the cytoplasm. The catalysed reaction is glycolate + NADP(+) = glyoxylate + NADPH + H(+). The enzyme catalyses (R)-glycerate + NAD(+) = 3-hydroxypyruvate + NADH + H(+). It carries out the reaction (R)-glycerate + NADP(+) = 3-hydroxypyruvate + NADPH + H(+). Catalyzes the NADPH-dependent reduction of glyoxylate and hydroxypyruvate into glycolate and glycerate, respectively. This is Glyoxylate/hydroxypyruvate reductase B from Shigella boydii serotype 18 (strain CDC 3083-94 / BS512).